A 95-amino-acid polypeptide reads, in one-letter code: Alpha-bungarotoxin, isoform A31 (95 aa).

The signal sequence occupies residues 1–21; sequence MKTLLLTLVVVTIVCLDLGYT. Disulfide bonds link cysteine 24–cysteine 44, cysteine 37–cysteine 65, cysteine 50–cysteine 54, cysteine 69–cysteine 80, and cysteine 81–cysteine 86.

It belongs to the three-finger toxin family. Long-chain subfamily. Type II alpha-neurotoxin sub-subfamily. As to quaternary structure, monomer in solution, homodimer in crystal state. In terms of tissue distribution, expressed by the venom gland.

It localises to the secreted. In terms of biological role, binds with high affinity to muscular (tested on Torpedo marmorata, Kd=0.4 nM) and neuronal (tested on chimeric alpha-7/CHRNA7, Kd=0.95 nM) nicotinic acetylcholine receptor (nAChR) and inhibits acetylcholine from binding to the receptor, thereby impairing neuromuscular and neuronal transmission. It also shows an activity on GABA(A) receptors. It antagonises GABA-activated currents with high potency when tested on primary hippocampal neurons. It inhibits recombinantly expressed GABA(A) receptors composed of alpha-2-beta-2-gamma-2 (GABRA2-GABRB2-GABRG2) subunits with high potency (62.3% inhibition at 20 uM of toxin). It also shows a weaker inhibition on GABA(A) receptors composed of alpha-1-beta-2-gamma-2 (GABRA1-GABRB2-GABRG2) subunits, alpha-4-beta-2-gamma-2 (GABRA4-GABRB2-GABRG2) subunits, and alpha-5-beta-2-gamma-2 (GABRA5-GABRB2-GABRG2) subunits. A very weak inhibition is also observed on GABA(A) receptor composed of alpha-1-beta-3-gamma-2 (GABRA1-GABRB3-GABRG2). It has also been shown to bind and inhibit recombinant GABA(A) receptor beta-3/GABRB3 subunit (Kd=about 50 nM). In addition, it blocks the extracellular increase of dopamine evoked by nicotine only at the higher dose (4.2 uM). In vivo, when intraperitoneally injected into mice, induces flaccid paralysis of the limbs and respiratory distress, and causes death in a dose-dependent manner. This Bungarus candidus (Malayan krait) protein is Alpha-bungarotoxin, isoform A31.